The sequence spans 863 residues: Glycogen phosphorylase (863 aa).

Residue Lys618 is modified to N6-(pyridoxal phosphate)lysine.

The protein belongs to the glycogen phosphorylase family. Pyridoxal 5'-phosphate serves as cofactor.

The enzyme catalyses [(1-&gt;4)-alpha-D-glucosyl](n) + phosphate = [(1-&gt;4)-alpha-D-glucosyl](n-1) + alpha-D-glucose 1-phosphate. In terms of biological role, phosphorylase is an important allosteric enzyme in carbohydrate metabolism. Enzymes from different sources differ in their regulatory mechanisms and in their natural substrates. However, all known phosphorylases share catalytic and structural properties. The protein is Glycogen phosphorylase (glgP) of Mycobacterium tuberculosis (strain CDC 1551 / Oshkosh).